The primary structure comprises 247 residues: tRNA uridine(34) hydroxylase (247 aa).

The region spanning 124–218 is the Rhodanese domain; sequence TKQNVILIDT…YLEDTHNKNN (95 aa). C178 serves as the catalytic Cysteine persulfide intermediate.

Belongs to the TrhO family.

It catalyses the reaction uridine(34) in tRNA + AH2 + O2 = 5-hydroxyuridine(34) in tRNA + A + H2O. Functionally, catalyzes oxygen-dependent 5-hydroxyuridine (ho5U) modification at position 34 in tRNAs. The chain is tRNA uridine(34) hydroxylase from Rickettsia prowazekii (strain Madrid E).